The following is a 732-amino-acid chain: Interleukin-31 receptor subunit alpha (732 aa).

An N-terminal signal peptide occupies residues 1–19 (MMWTWALWMLPSLCKFSLA). Over 20 to 519 (ALPAKPENIS…FKTLSFSVFE (500 aa)) the chain is Extracellular. 5 Fibronectin type-III domains span residues 24 to 122 (KPEN…IAKT), 124 to 225 (PPKI…TEEE), 223 to 315 (EEEA…PVAT), 319 to 416 (PAIQ…QAYA), and 421 to 515 (PSEG…TLSF). Residues asparagine 37, asparagine 67, asparagine 93, asparagine 166, asparagine 187, asparagine 277, asparagine 283, asparagine 395, asparagine 455, and asparagine 504 are each glycosylated (N-linked (GlcNAc...) asparagine). Residues 520–540 (IILITSLIGGGLLILIILTVA) traverse the membrane as a helical segment. At 541–732 (YGLKKPNKLT…KLPEHTKGEV (192 aa)) the chain is on the cytoplasmic side.

The protein belongs to the type I cytokine receptor family. Type 2 subfamily. In terms of assembly, heterodimer with OSMR. Interacts with JAK1 and STAT3. N-glycosylated. In terms of tissue distribution, expressed in CD14- and CD56-positive blood cells. Expressed in macrophages. Expressed in keratinocytes. Expressed in a subset of dorsal root ganglia neurons (at protein level). Expressed at low levels in testis, ovary, brain, prostate, placenta, thymus, bone marrow, trachea and skin. Expressed in bronchial and alveolar epithelial cells and pulmonary fibroblasts. Detected in all of the myelomonocytic lineage. Isoform 6: Expressed at higher levels in lesional skin compared to healthy skin of atopic dermatitis patients.

The protein localises to the cell membrane. Its subcellular location is the presynaptic cell membrane. It is found in the cell projection. The protein resides in the axon. Associates with OSMR to form the interleukin-31 receptor which activates STAT3 and to a lower extent STAT1 and STAT5. May function in skin immunity. Mediates IL31-induced itch, probably in a manner dependent on cation channels TRPA1 and TRPV1. Positively regulates numbers and cycling status of immature subsets of myeloid progenitor cells in bone marrow in vivo and enhances myeloid progenitor cell survival in vitro. In Homo sapiens (Human), this protein is Interleukin-31 receptor subunit alpha (IL31RA).